A 215-amino-acid chain; its full sequence is 23.2 kDa heat shock protein (215 aa).

An N-terminal signal peptide occupies residues 1–27 (MASMRTAAAAAMLACIAVVLASTAADG). The sHSP domain occupies 69 to 189 (DVAMLSMARV…GPRVVGIASA (121 aa)). The disordered stretch occupies residues 183–215 (VVGIASAGGDDGGKKSIGGAGEGQNQQAKKVEL). Positions 205-215 (GQNQQAKKVEL) are enriched in polar residues.

It belongs to the small heat shock protein (HSP20) family. In terms of assembly, may form oligomeric structures.

It localises to the endoplasmic reticulum. The protein is 23.2 kDa heat shock protein (HSP23.2) of Oryza sativa subsp. japonica (Rice).